A 428-amino-acid polypeptide reads, in one-letter code: Serine--tRNA ligase (428 aa).

235–237 (TAE) is an L-serine binding site. 266 to 268 (RSE) is an ATP binding site. Residue Glu289 coordinates L-serine. An ATP-binding site is contributed by 353–356 (EISS). Ser389 contributes to the L-serine binding site.

This sequence belongs to the class-II aminoacyl-tRNA synthetase family. Type-1 seryl-tRNA synthetase subfamily. In terms of assembly, homodimer. The tRNA molecule binds across the dimer.

It localises to the cytoplasm. The catalysed reaction is tRNA(Ser) + L-serine + ATP = L-seryl-tRNA(Ser) + AMP + diphosphate + H(+). The enzyme catalyses tRNA(Sec) + L-serine + ATP = L-seryl-tRNA(Sec) + AMP + diphosphate + H(+). It participates in aminoacyl-tRNA biosynthesis; selenocysteinyl-tRNA(Sec) biosynthesis; L-seryl-tRNA(Sec) from L-serine and tRNA(Sec): step 1/1. Functionally, catalyzes the attachment of serine to tRNA(Ser). Is also able to aminoacylate tRNA(Sec) with serine, to form the misacylated tRNA L-seryl-tRNA(Sec), which will be further converted into selenocysteinyl-tRNA(Sec). This Shewanella piezotolerans (strain WP3 / JCM 13877) protein is Serine--tRNA ligase.